A 413-amino-acid polypeptide reads, in one-letter code: Multifunctional CCA protein (413 aa).

Residues glycine 8 and arginine 11 each coordinate ATP. CTP contacts are provided by glycine 8 and arginine 11. Residues aspartate 21 and aspartate 23 each contribute to the Mg(2+) site. ATP contacts are provided by arginine 91, arginine 137, and arginine 140. CTP-binding residues include arginine 91, arginine 137, and arginine 140. The HD domain maps to 228–329 (TGLHTLMTVT…VKLFDSIDAW (102 aa)).

The protein belongs to the tRNA nucleotidyltransferase/poly(A) polymerase family. Bacterial CCA-adding enzyme type 1 subfamily. In terms of assembly, monomer. Can also form homodimers and oligomers. Mg(2+) serves as cofactor. It depends on Ni(2+) as a cofactor.

The enzyme catalyses a tRNA precursor + 2 CTP + ATP = a tRNA with a 3' CCA end + 3 diphosphate. It catalyses the reaction a tRNA with a 3' CCA end + 2 CTP + ATP = a tRNA with a 3' CCACCA end + 3 diphosphate. Its function is as follows. Catalyzes the addition and repair of the essential 3'-terminal CCA sequence in tRNAs without using a nucleic acid template. Adds these three nucleotides in the order of C, C, and A to the tRNA nucleotide-73, using CTP and ATP as substrates and producing inorganic pyrophosphate. tRNA 3'-terminal CCA addition is required both for tRNA processing and repair. Also involved in tRNA surveillance by mediating tandem CCA addition to generate a CCACCA at the 3' terminus of unstable tRNAs. While stable tRNAs receive only 3'-terminal CCA, unstable tRNAs are marked with CCACCA and rapidly degraded. The polypeptide is Multifunctional CCA protein (Klebsiella pneumoniae subsp. pneumoniae (strain ATCC 700721 / MGH 78578)).